The following is an 86-amino-acid chain: Neurotoxin LmNaTx34.1 (86 aa).

Residues 1-18 form the signal peptide; that stretch reads MKTVILVVIALMVIEVQG. The region spanning 19–85 is the LCN-type CS-alpha/beta domain; it reads DGYLMVRAGI…IWTYEKNTCS (67 aa). Intrachain disulfides connect Cys32–Cys84, Cys36–Cys57, Cys43–Cys64, and Cys47–Cys66.

The protein belongs to the long (4 C-C) scorpion toxin superfamily. Sodium channel inhibitor family. Beta subfamily. As to expression, expressed by the venom gland.

The protein localises to the secreted. In terms of biological role, binds voltage-independently at site-4 of sodium channels (Nav) and shift the voltage of activation toward more negative potentials thereby affecting sodium channel activation and promoting spontaneous and repetitive firing. The polypeptide is Neurotoxin LmNaTx34.1 (Lychas mucronatus (Chinese swimming scorpion)).